The following is a 197-amino-acid chain: A-kinase anchor protein 14 (197 aa).

Polar residues-rich tracts occupy residues M1–K11 and A19–D29. Residues M1–D29 are disordered. The tract at residues E35–V52 is RII-binding.

In terms of assembly, binds to type II regulatory subunits (RII). In terms of tissue distribution, present in cilia (at protein level). Expressed in tissues containing axoneme-based organelles (cilia and/or flagella): trachea and testis. Highly expressed in airway cilia.

It localises to the cytoplasm. In terms of biological role, binds to type II regulatory subunits of protein kinase A and anchors/targets them. In Homo sapiens (Human), this protein is A-kinase anchor protein 14 (AKAP14).